The primary structure comprises 60 residues: MKSVCGVLIILVVLTTMLSISTFSTVGAEADCPISEAIKCVEKCKEKVEVCEPGVCKCSG.

The signal sequence occupies residues 1–28 (MKSVCGVLIILVVLTTMLSISTFSTVGA). 3 disulfide bridges follow: C32-C51, C40-C56, and C44-C58.

Belongs to the short scorpion toxin superfamily. Potassium channel inhibitor family. Alpha-KTx 29 subfamily. Expressed by the venom gland.

It localises to the secreted. Functionally, weakly inhibits the Kv1.3/KCNA3 channel (1 uM of thetoxin inhibits currents by 13.2%) and Kv7.1/KCNQ1 channel (10 uM of the toxin inhibits currents by 27.7%). The protein is Potassium channel toxin alpha-KTx 29.2 of Lychas mucronatus (Chinese swimming scorpion).